Here is a 31-residue protein sequence, read N- to C-terminus: Protamine-Z (31 aa).

The tract at residues 1–31 (ARRRRSRRASRPVRRRRPRRVSRRRRARRRR) is disordered.

In terms of tissue distribution, testis.

It is found in the nucleus. The protein localises to the chromosome. Its function is as follows. Protamines substitute for histones in the chromatin of sperm during the haploid phase of spermatogenesis. They compact sperm DNA into a highly condensed, stable and inactive complex. This Clupea harengus (Atlantic herring) protein is Protamine-Z.